A 144-amino-acid chain; its full sequence is Transcriptional regulator SlyA (144 aa).

The 134-residue stretch at 2-135 (ESPLGSDLAR…LNKIISKLEK (134 aa)) folds into the HTH marR-type domain. Positions 49–72 (QIQLAKAIGIEQPSLVRTLDQLEE) form a DNA-binding region, H-T-H motif.

The protein belongs to the SlyA family. As to quaternary structure, homodimer.

Its function is as follows. Transcription regulator that can specifically activate or repress expression of target genes. The chain is Transcriptional regulator SlyA from Blochmanniella pennsylvanica (strain BPEN).